The primary structure comprises 656 residues: Exoribonuclease 2 (656 aa).

The RNB domain maps to 190 to 518; sequence RSDLTKTPFF…LNHRLIKSVL (329 aa). The 86-residue stretch at 564-649 folds into the S1 motif domain; the sequence is KWRYKAEIFD…ESGQLIGKLA (86 aa).

It belongs to the RNR ribonuclease family. RNase II subfamily.

The protein localises to the cytoplasm. The enzyme catalyses Exonucleolytic cleavage in the 3'- to 5'-direction to yield nucleoside 5'-phosphates.. Functionally, involved in mRNA degradation. Hydrolyzes single-stranded polyribonucleotides processively in the 3' to 5' direction. In Psychromonas ingrahamii (strain DSM 17664 / CCUG 51855 / 37), this protein is Exoribonuclease 2.